A 489-amino-acid chain; its full sequence is Protein TOS4 (489 aa).

Polar residues-rich tracts occupy residues 1 to 10 (MSSQFPSSPY) and 20 to 32 (NYKQQPNCPSSNY). The tract at residues 1 to 101 (MSSQFPSSPY…FSSKLSSPSR (101 aa)) is disordered. Residue S40 is modified to Phosphoserine. The span at 56 to 68 (PSSSIGRVSSPVR) shows a compositional bias: polar residues. The segment covering 89–100 (SPKFSSKLSSPS) has biased composition (low complexity). S100 carries the post-translational modification Phosphoserine. The 53-residue stretch at 118–170 (ITVGRNSSQCDVALCKNKFISRVHASITYLPQTNEVKIHCFSMNGLIVTYRKQ) folds into the FHA domain. The segment at 316-366 (SSPLSSVSSVDHEEQTLRQDSLSSDKNPMTMKKPKLNKRVLPSKPKKSVKE) is disordered. The segment covering 333-342 (RQDSLSSDKN) has biased composition (polar residues).

The protein belongs to the PLM2/TOS4 family. In terms of processing, phosphorylated by CDC28.

Its subcellular location is the nucleus. In terms of biological role, binds to the promoters of genes with functions important for the G1/S (start) transition; primarily genes involved in pheromone response, polarized growth and transcription. This Saccharomyces cerevisiae (strain ATCC 204508 / S288c) (Baker's yeast) protein is Protein TOS4 (TOS4).